The following is a 650-amino-acid chain: SUMO-activating enzyme subunit 2 (650 aa).

ATP is bound by residues 25-30, Asp49, 57-60, Lys73, 96-97, and 118-123; these read GAGGIG, NLNR, SI, and DNRAAR. Zn(2+) is bound by residues Cys159 and Cys162. Residue Cys174 is the Glycyl thioester intermediate of the active site. Lys191 participates in a covalent cross-link: Glycyl lysine isopeptide (Lys-Gly) (interchain with G-Cter in SUMO). Lys237 participates in a covalent cross-link: Glycyl lysine isopeptide (Lys-Gly) (interchain with G-Cter in SUMO1). Residues Lys258, Lys282, and Lys286 each participate in a glycyl lysine isopeptide (Lys-Gly) (interchain with G-Cter in SUMO) cross-link. 2 residues coordinate Zn(2+): Cys446 and Cys449. A disordered region spans residues 554-650; sequence DAPDKAPAPS…DDDEDIIALD (97 aa). Polar residues predominate over residues 572–586; it reads ANGNKDSAQPSTSSK. Positions 590–603 are enriched in acidic residues; it reads EDDDVLLVDSDEEP. At Ser599 the chain carries Phosphoserine. Glycyl lysine isopeptide (Lys-Gly) (interchain with G-Cter in SUMO) cross-links involve residues Lys618 and Lys630. The span at 638–650 shows a compositional bias: acidic residues; sequence PADDDDEDIIALD.

It belongs to the ubiquitin-activating E1 family. In terms of assembly, heterodimer of sae1 and uba2/sae2. The heterodimer corresponds to the two domains that are encoded on a single polypeptide chain in ubiquitin-activating enzyme E1. Interacts with ube2i. In terms of processing, sumoylated with SUMO1 and SUMO2/3 and by UBC9. Sumoylation at Lys-237 inhibits enzymatic activity. Sumoylation at the C-terminal lysine cluster plays an essential role in nuclear trafficking. Expressed in eye, brain and pectoral fins.

Its subcellular location is the cytoplasm. It localises to the nucleus. The protein operates within protein modification; protein sumoylation. Its function is as follows. The heterodimer acts as an E1 ligase for sumo1, sumo2, and sumo3. It mediates ATP-dependent activation of sumo proteins followed by formation of a thioester bond between a sumo protein and a conserved active site cysteine residue on uba2/sae2. This chain is SUMO-activating enzyme subunit 2 (uba2), found in Danio rerio (Zebrafish).